The following is a 211-amino-acid chain: Neuroendocrine protein 7B2 (211 aa).

The first 26 residues, 1-26, serve as a signal peptide directing secretion; the sequence is MVSRMVSTMLSGLLFWLASGWTPAFA. A disordered region spans residues 106 to 132; that stretch reads DFSEDQGYPDPPNPCPVGKTDDGCLEN. Cys120 and Cys129 are oxidised to a cystine. 2 positions are modified to phosphoserine: Ser140 and Ser204. Positions 173–211 are disordered; the sequence is GGERRKRRSVNPYLQGQRLDNVVAKKSVPHFSDEDKDPE.

It belongs to the 7B2 family. As to quaternary structure, interacts with PCSK2/PC2 early in the secretory pathway. Dissociation occurs at later stages. Post-translationally, proteolytically cleaved in the Golgi by a furin-like convertase to generate bioactive peptides. In terms of processing, sulfated on tyrosine residues.

It localises to the secreted. Acts as a molecular chaperone for PCSK2/PC2, preventing its premature activation in the regulated secretory pathway. Binds to inactive PCSK2 in the endoplasmic reticulum and facilitates its transport from there to later compartments of the secretory pathway where it is proteolytically matured and activated. Also required for cleavage of PCSK2 but does not appear to be involved in its folding. Plays a role in regulating pituitary hormone secretion. The C-terminal peptide inhibits PCSK2 in vitro. The polypeptide is Neuroendocrine protein 7B2 (SCG5) (Pan troglodytes (Chimpanzee)).